The following is a 199-amino-acid chain: dITP/XTP pyrophosphatase (199 aa).

Residue 7 to 12 participates in substrate binding; sequence TGNKGK. Residue Asp-71 is the Proton acceptor of the active site. Asp-71 is a Mg(2+) binding site. Substrate contacts are provided by residues Ala-72, 154 to 157, Lys-177, and 182 to 183; these read FGYD and HR.

Belongs to the HAM1 NTPase family. In terms of assembly, homodimer. The cofactor is Mg(2+).

The enzyme catalyses XTP + H2O = XMP + diphosphate + H(+). The catalysed reaction is dITP + H2O = dIMP + diphosphate + H(+). It carries out the reaction ITP + H2O = IMP + diphosphate + H(+). In terms of biological role, pyrophosphatase that catalyzes the hydrolysis of nucleoside triphosphates to their monophosphate derivatives, with a high preference for the non-canonical purine nucleotides XTP (xanthosine triphosphate), dITP (deoxyinosine triphosphate) and ITP. Seems to function as a house-cleaning enzyme that removes non-canonical purine nucleotides from the nucleotide pool, thus preventing their incorporation into DNA/RNA and avoiding chromosomal lesions. This is dITP/XTP pyrophosphatase from Bdellovibrio bacteriovorus (strain ATCC 15356 / DSM 50701 / NCIMB 9529 / HD100).